A 23-amino-acid chain; its full sequence is Gastrin-releasing peptide (23 aa).

A Methionine amide modification is found at Met-23.

It belongs to the bombesin/neuromedin-B/ranatensin family.

It is found in the secreted. Its subcellular location is the cytoplasmic vesicle. The protein resides in the secretory vesicle lumen. Functionally, stimulates the release of gastrin and other gastrointestinal hormones. This chain is Gastrin-releasing peptide (grp), found in Oncorhynchus mykiss (Rainbow trout).